The following is a 1415-amino-acid chain: DNA-directed RNA polymerase subunit beta' (1415 aa).

Zn(2+) contacts are provided by cysteine 70, cysteine 72, cysteine 85, and cysteine 88. The Mg(2+) site is built by aspartate 461, aspartate 463, and aspartate 465. Zn(2+)-binding residues include cysteine 820, cysteine 894, cysteine 901, and cysteine 904.

Belongs to the RNA polymerase beta' chain family. As to quaternary structure, the RNAP catalytic core consists of 2 alpha, 1 beta, 1 beta' and 1 omega subunit. When a sigma factor is associated with the core the holoenzyme is formed, which can initiate transcription. Mg(2+) is required as a cofactor. Zn(2+) serves as cofactor.

It carries out the reaction RNA(n) + a ribonucleoside 5'-triphosphate = RNA(n+1) + diphosphate. In terms of biological role, DNA-dependent RNA polymerase catalyzes the transcription of DNA into RNA using the four ribonucleoside triphosphates as substrates. The polypeptide is DNA-directed RNA polymerase subunit beta' (Cupriavidus necator (strain ATCC 17699 / DSM 428 / KCTC 22496 / NCIMB 10442 / H16 / Stanier 337) (Ralstonia eutropha)).